Here is a 433-residue protein sequence, read N- to C-terminus: MSTPSRSAALFERAQKTIPGGVNSPVRAFRSVGGIPRFIAKAAGPYLWDADGTRYIDYVGSWGPMIVGHAHPEVVRAVQEVAADSFSFGAPTEAEVVMAEEICKLVPSIEQVRLVSSGTEATMSALRLARGFTGRDLIVKFEGCYHGHADSLLVKAGSGLLTFADTTQNAPSSTGVPEDVVKHTMVLPYNDVAALREAFARHGKEIAAVIVEPVAGNMNLVRGSNEFHQAMRALCTEHGAVLIFDEVMTGFRVALGCAQALYGIKPDLTCLGKVIGGGMPAAAFGGRRDIMGFLAPLGSVYQAGTLSGNPLAVAAGLTTLRLIAAEGFHDRLATQTRKLVDGLAEIAREVGVPFAADSVGGMFGIYFREGVPTSFAEVTKSDVGRFNAFFHAMLDQGVYLAPSAFEAGFVSSTHDDAILDATFEAARKAFKAV.

Lys273 carries the N6-(pyridoxal phosphate)lysine modification.

It belongs to the class-III pyridoxal-phosphate-dependent aminotransferase family. HemL subfamily. As to quaternary structure, homodimer. Pyridoxal 5'-phosphate serves as cofactor.

It localises to the cytoplasm. It catalyses the reaction (S)-4-amino-5-oxopentanoate = 5-aminolevulinate. Its pathway is porphyrin-containing compound metabolism; protoporphyrin-IX biosynthesis; 5-aminolevulinate from L-glutamyl-tRNA(Glu): step 2/2. This chain is Glutamate-1-semialdehyde 2,1-aminomutase, found in Ralstonia pickettii (strain 12J).